The following is a 149-amino-acid chain: Putative eggshell protein (149 aa).

6 consecutive repeat copies span residues 1–5 (YGYDK), 6–10 (YGYDK), 11–15 (YGYDK), 16–20 (YGYDK), 21–25 (YGYDK), and 26–30 (YGYEK). A 13 X 5 AA approximate tandem repeats of Y-G-Y-[DE]-K region spans residues 1 to 64 (YGYDKYGYDK…YGYDKYGDDK (64 aa)). A 7; truncated repeat occupies 31-34 (GYDK). Repeat copies occupy residues 35–39 (YGYDK), 40–44 (YGYEK), and 45–49 (YGYDK). One copy of the 11; approximate repeat lies at 50–54 (YGNEK). Copy 12 of the repeat occupies 55-59 (YGYDK). One copy of the 13; approximate repeat lies at 60-64 (YGDDK). Basic and acidic residues predominate over residues 105–124 (YRKDHDKHDHDEHDHHDDHH). Positions 105 to 149 (YRKDHDKHDHDEHDHHDDHHDHRHHHHEHDHHHHHEHDHKNGKGY) are disordered. The span at 125–141 (DHRHHHHEHDHHHHHEH) shows a compositional bias: basic residues.

The chain is Putative eggshell protein from Schistosoma mansoni (Blood fluke).